Here is a 389-residue protein sequence, read N- to C-terminus: Zinc finger C2HC domain-containing protein 1C homolog (389 aa).

2 disordered regions span residues 16 to 44 (MLPHNTTEAPGPHSAKQDSYEQGDSSQQS) and 84 to 115 (SYPHCTGISQQDPESDSQGQGKGLFYSSGPQS). Composition is skewed to polar residues over residues 35-44 (YEQGDSSQQS) and 90-102 (GISQQDPESDSQG). Positions 211–266 (VQIRRLEAAGESLEEEIRRKQILLRGKLKKTEEELRRIQMQKEQAKENENRELQKI) form a coiled coil. 2 disordered regions span residues 301-320 (REDETWGRSQQNSSPFQLSD) and 343-389 (SELS…PQLG). Residues 307–317 (GRSQQNSSPFQ) show a composition bias toward polar residues. Residues 368 to 382 (SSLSMAPDSSGSSGS) are compositionally biased toward low complexity.

This sequence belongs to the ZC2HC1 family.

This Pongo abelii (Sumatran orangutan) protein is Zinc finger C2HC domain-containing protein 1C homolog (ZC2HC1C).